Consider the following 543-residue polypeptide: Hydroxylamine reductase (543 aa).

4 residues coordinate [4Fe-4S] cluster: Cys-5, Cys-8, Cys-17, and Cys-23. Hybrid [4Fe-2O-2S] cluster is bound by residues His-236, Glu-260, Cys-304, Cys-398, Cys-426, Cys-451, Glu-486, and Lys-488. Cys-398 is modified (cysteine persulfide).

The protein belongs to the HCP family. The cofactor is [4Fe-4S] cluster. Hybrid [4Fe-2O-2S] cluster is required as a cofactor.

The protein localises to the cytoplasm. The catalysed reaction is A + NH4(+) + H2O = hydroxylamine + AH2 + H(+). Its function is as follows. Catalyzes the reduction of hydroxylamine to form NH(3) and H(2)O. This chain is Hydroxylamine reductase, found in Bacteroides thetaiotaomicron (strain ATCC 29148 / DSM 2079 / JCM 5827 / CCUG 10774 / NCTC 10582 / VPI-5482 / E50).